A 200-amino-acid chain; its full sequence is Rho-related protein racD (200 aa).

GTP-binding residues include alanine 20, glycine 22, lysine 23, threonine 24, cysteine 25, tyrosine 39, and threonine 42. Position 24 (threonine 24) interacts with Mg(2+). 2 short sequence motifs (switch) span residues 33-44 (NEFPKDYVPTVF) and 64-82 (DTAG…YPNT). Threonine 42 serves as a coordination point for Mg(2+). Residues lysine 123, aspartate 125, and alanine 166 each contribute to the GTP site. Residue cysteine 197 is modified to Cysteine methyl ester. The S-geranylgeranyl cysteine moiety is linked to residue cysteine 197. A propeptide spans 198–200 (ALL) (removed in mature form).

This sequence belongs to the small GTPase superfamily. Rho family. The cofactor is Mg(2+).

The protein localises to the cell membrane. It localises to the cytoplasm. Its subcellular location is the cytoskeleton. It catalyses the reaction GTP + H2O = GDP + phosphate + H(+). Its activity is regulated as follows. Regulated by guanine nucleotide exchange factors (GEFs) which promote the exchange of bound GDP for free GTP, GTPase activating proteins (GAPs) which increase the GTP hydrolysis activity, and GDP dissociation inhibitors which inhibit the dissociation of the nucleotide from the GTPase. Its function is as follows. Small GTPase which cycles between active GTP-bound and inactive GDP-bound states. This Entamoeba histolytica (strain ATCC 30459 / HM-1:IMSS / ABRM) protein is Rho-related protein racD.